Here is a 593-residue protein sequence, read N- to C-terminus: MAGGLLQLVAYGAQDVYLTGNPMITFFKVVYRRHTNFAVESIEQFFGGNLGFGKKSSAEINRSGDLITQVFLKVTLPEVRYCGDFTNFGHVEFAWVRNIGHAIVEETELEIGGSPIDKHYGDWLQIWQDVSSSKDHEKGLAKMLGDVPELTSISTLSWDVPDNTVLKPSYTLYVPLQFYFNRNNGLALPLIALQYHQVRIYVKFRQADQCYIASDAFKSGCGNLQLDDVSLYVNYVFLDTEERRRFAQVSHEYLIEQLQFTGEESAGSSNSAKYKLNFNHPVKAIYWVTKLGNYQGGKFMTYDPVCWENARENAAKLLLLAQYDLDDWGYFQEPGGYECEGNDGRSYVGDCGVQYTAVDPSNPSEEPSYIFNDTTTAEAFDGSLLIGKLAPCVPLLKRNKDVDLKDKVEGIIRIHTDFENDRMKYPEVEKITRNDLTLHDLSVPISKYDVDNRVDYIKKFDVTVWQHNNFGLLIDGSGNPTHEAELQLNGQPRQSKRGGIWYDTVNPTVHHTKSPRDGVNVFSFALNPEEHQPSCTCNFSRIDTAQLNLWFQHFTNHKFADVFADNDNKVLIFAVNYNVLRMLSGMAGLAYSN.

This sequence belongs to the NCLDV major capsid protein family.

The protein localises to the virion. In Acanthamoeba polyphaga mimivirus (APMV), this protein is Capsid protein 1.